Reading from the N-terminus, the 271-residue chain is Inactive phospholipid phosphatase 7 (271 aa).

Residues 1-69 (MPVSQSRARA…RQSQQLPEED (69 aa)) are disordered. Residues 1–112 (MPVSQSRARA…AASWASARSM (112 aa)) lie on the Cytoplasmic side of the membrane. The segment covering 24 to 36 (SLNQPPKGTQEPR) has biased composition (polar residues). A phosphoserine mark is found at Ser-43 and Ser-62. The tract at residues 70–91 (CMQLNPSFKGIAFNSLLAIDIC) is interaction with MTOR. Residues 113–133 (VKLIGITSHGIPWIGGTILCL) form a helical membrane-spanning segment. The Extracellular portion of the chain corresponds to 134-141 (VRSSTLAG). Residues 142-162 (QEVLMNLLLALLLDIMTVAGV) form a helical membrane-spanning segment. Residues 163–202 (QKLIKRRGPYETSPGLLDYLTMDIYAFPAGHASRAAMVSK) lie on the Cytoplasmic side of the membrane. Residues 203–223 (FFLSHLVLAVPLRVLLVLWAF) traverse the membrane as a helical segment. Over 224–239 (CVGLSRVMIGRHHITD) the chain is Extracellular. The chain crosses the membrane as a helical span at residues 240–260 (VISGFIIGYFQFRLVELVWMS). The Cytoplasmic segment spans residues 261–271 (SNTCQMLISAW).

Belongs to the PA-phosphatase related phosphoesterase family. As to quaternary structure, homo- and heterooligomer. Interacts with MTOR; controls MTOR-dependent IGF2 expression during myoblast differentiation.

The protein resides in the nucleus envelope. Its subcellular location is the endoplasmic reticulum membrane. The protein localises to the membrane. Plays a role as negative regulator of myoblast differentiation, in part through effects on MTOR signaling. Has no detectable enzymatic activity. In Rattus norvegicus (Rat), this protein is Inactive phospholipid phosphatase 7.